The following is a 392-amino-acid chain: Transcription factor GATA-4 (392 aa).

Residues 75-113 are disordered; the sequence is SSAYNPGTSHPPVSPRFTFSSSPPITAPSSREVSYSSPL. Residues 91 to 113 show a composition bias toward polar residues; the sequence is FTFSSSPPITAPSSREVSYSSPL. GATA-type zinc fingers lie at residues 184-208 and 238-262; these read CVNC…CNAC and CANC…CNAC. Disordered stretches follow at residues 279–339 and 359–392; these read KEGI…HSNS and MPSL…LVLA. Over residues 284 to 293 the composition is skewed to basic residues; the sequence is TRKRKPKNLS. Positions 302-316 are enriched in low complexity; that stretch reads SGSDSLTPSTSSTNS. Over residues 364-380 the composition is skewed to polar residues; it reads LSPQNHHSTFNPSPQAN.

In terms of tissue distribution, expressed at high levels in heart, small intestine, stomach, ovary, and liver. Found at much lower levels in lung, spleen, pancreas and skin.

The protein localises to the nucleus. In terms of biological role, transcriptional activator that binds to the consensus sequence 5'-AGATAG-3'. Associated with cardiac specification and can regulate cardiac-specific transcription during embryogenesis. Activates the expression of cardiac MHC-alpha in vivo. This is Transcription factor GATA-4 (gata4) from Xenopus laevis (African clawed frog).